The following is a 172-amino-acid chain: uncharacterized protein (172 aa).

3 helical membrane-spanning segments follow: residues 7-27 (ILISYVGLIKLALAGILCYGI), 59-79 (LMIFLAFGFPIFFIGSFLYLF), and 89-109 (FSLTFAITFFVLFIFGLLFVK).

This sequence to M.jannaschii MJ0695.

The protein resides in the cell membrane. This is an uncharacterized protein from Methanocaldococcus jannaschii (strain ATCC 43067 / DSM 2661 / JAL-1 / JCM 10045 / NBRC 100440) (Methanococcus jannaschii).